We begin with the raw amino-acid sequence, 272 residues long: Dermonecrotic toxin LvSicTox-alphaIC1biv (272 aa).

Residue His5 is part of the active site. Residues Glu25 and Asp27 each contribute to the Mg(2+) site. The Nucleophile role is filled by His41. Intrachain disulfides connect Cys45–Cys51 and Cys47–Cys189. Residue Asp84 participates in Mg(2+) binding.

Belongs to the arthropod phospholipase D family. Class II subfamily. Requires Mg(2+) as cofactor. Expressed by the venom gland.

The protein localises to the secreted. It carries out the reaction an N-(acyl)-sphingosylphosphocholine = an N-(acyl)-sphingosyl-1,3-cyclic phosphate + choline. The catalysed reaction is an N-(acyl)-sphingosylphosphoethanolamine = an N-(acyl)-sphingosyl-1,3-cyclic phosphate + ethanolamine. It catalyses the reaction a 1-acyl-sn-glycero-3-phosphocholine = a 1-acyl-sn-glycero-2,3-cyclic phosphate + choline. The enzyme catalyses a 1-acyl-sn-glycero-3-phosphoethanolamine = a 1-acyl-sn-glycero-2,3-cyclic phosphate + ethanolamine. Its function is as follows. Dermonecrotic toxins cleave the phosphodiester linkage between the phosphate and headgroup of certain phospholipids (sphingolipid and lysolipid substrates), forming an alcohol (often choline) and a cyclic phosphate. This toxin acts on sphingomyelin (SM). It may also act on ceramide phosphoethanolamine (CPE), lysophosphatidylcholine (LPC) and lysophosphatidylethanolamine (LPE), but not on lysophosphatidylserine (LPS), and lysophosphatidylglycerol (LPG). It acts by transphosphatidylation, releasing exclusively cyclic phosphate products as second products. Induces dermonecrosis, hemolysis, increased vascular permeability, edema, inflammatory response, and platelet aggregation. This chain is Dermonecrotic toxin LvSicTox-alphaIC1biv, found in Loxosceles variegata (Recluse spider).